The primary structure comprises 274 residues: 2,3,4,5-tetrahydropyridine-2,6-dicarboxylate N-succinyltransferase (274 aa).

R104 and D141 together coordinate substrate.

This sequence belongs to the transferase hexapeptide repeat family. As to quaternary structure, homotrimer.

Its subcellular location is the cytoplasm. It catalyses the reaction (S)-2,3,4,5-tetrahydrodipicolinate + succinyl-CoA + H2O = (S)-2-succinylamino-6-oxoheptanedioate + CoA. Its pathway is amino-acid biosynthesis; L-lysine biosynthesis via DAP pathway; LL-2,6-diaminopimelate from (S)-tetrahydrodipicolinate (succinylase route): step 1/3. The sequence is that of 2,3,4,5-tetrahydropyridine-2,6-dicarboxylate N-succinyltransferase from Yersinia pestis.